The primary structure comprises 138 residues: uncharacterized protein (138 aa).

This is an uncharacterized protein from Methanocaldococcus jannaschii (strain ATCC 43067 / DSM 2661 / JAL-1 / JCM 10045 / NBRC 100440) (Methanococcus jannaschii).